The sequence spans 313 residues: Olfactory receptor 2B6 (313 aa).

The Extracellular portion of the chain corresponds to 1–27 (MSWANESITGEFVLLGFSDQPWLEFPL). Residue Asn5 is glycosylated (N-linked (GlcNAc...) asparagine). Residues 28 to 48 (FVVFLTSYIVTIFGNLNIILV) form a helical membrane-spanning segment. Topologically, residues 49 to 57 (SHLDPKLHT) are cytoplasmic. A helical transmembrane segment spans residues 58-78 (PMYFFLTNLSVIDLCYITCTV). Residues 79–97 (PQMLVNLRSIRKVISFGGC) are Extracellular-facing. Cysteines 97 and 189 form a disulfide. A helical transmembrane segment spans residues 98–118 (VVQLFMFLALGATECVLLPVM). Topologically, residues 119 to 143 (SFDRFVAICRPLHYSVIMHQRLCLQ) are cytoplasmic. The helical transmembrane segment at 144 to 164 (LAAVSWIIGFGNSVWLSILTL) threads the bilayer. At 165-200 (QLPRCGHYVIDHFLCEVPALLKLSCVDVTANEAELF) the chain is on the extracellular side. A helical transmembrane segment spans residues 201–221 (FVSVFFHLTPLSLILTSYAFI). Residues 222 to 244 (ARAILKIQSAEGRQKAFGTCSSH) lie on the Cytoplasmic side of the membrane. The chain crosses the membrane as a helical span at residues 245–265 (LIVVSLFYGTALSVYFLPPSP). Residues 266-271 (HSKNRR) are Extracellular-facing. The helical transmembrane segment at 272 to 292 (KMVPLFYGIIAPMLNPLIYTL) threads the bilayer. The Cytoplasmic segment spans residues 293 to 313 (RNKEVKDAFKRLIKRVFLSKN).

The protein belongs to the G-protein coupled receptor 1 family.

The protein localises to the cell membrane. Odorant receptor. The protein is Olfactory receptor 2B6 of Mus musculus (Mouse).